Here is a 376-residue protein sequence, read N- to C-terminus: Chaperone protein DnaJ (376 aa).

Residues 5-69 form the J domain; the sequence is DYYEVLGISK…QKRAQYDQYG (65 aa). The CR-type zinc finger occupies 133–215; that stretch reads GKDAEIEIPR…CHGKGRVTKT (83 aa). Residues Cys-146, Cys-149, Cys-163, Cys-166, Cys-189, Cys-192, Cys-203, and Cys-206 each contribute to the Zn(2+) site. CXXCXGXG motif repeat units lie at residues 146–153, 163–170, 189–196, and 203–210; these read CDTCHGSG, CSHCGGKG, CQYCNGTG, and CPTCHGKG.

It belongs to the DnaJ family. Homodimer. Zn(2+) serves as cofactor.

The protein resides in the cytoplasm. Its function is as follows. Participates actively in the response to hyperosmotic and heat shock by preventing the aggregation of stress-denatured proteins and by disaggregating proteins, also in an autonomous, DnaK-independent fashion. Unfolded proteins bind initially to DnaJ; upon interaction with the DnaJ-bound protein, DnaK hydrolyzes its bound ATP, resulting in the formation of a stable complex. GrpE releases ADP from DnaK; ATP binding to DnaK triggers the release of the substrate protein, thus completing the reaction cycle. Several rounds of ATP-dependent interactions between DnaJ, DnaK and GrpE are required for fully efficient folding. Also involved, together with DnaK and GrpE, in the DNA replication of plasmids through activation of initiation proteins. This Listeria monocytogenes serotype 4a (strain HCC23) protein is Chaperone protein DnaJ.